A 299-amino-acid polypeptide reads, in one-letter code: Fluorinase (299 aa).

Residues Asp16, 21–23, Tyr77, Ser158, Asp210, Asn215, 269–270, and 277–279 contribute to the S-adenosyl-L-methionine site; these read DDS, SR, and RNA.

As to quaternary structure, homohexamer; dimers of trimer.

It carries out the reaction fluoride + S-adenosyl-L-methionine = 5'-deoxy-5'-fluoroadenosine + L-methionine. With respect to regulation, competitively inhibited by S-adenosyl-L-homocysteine (AdoHcy) and S-adenosyl-L-homocysteine (SAH). Sinefungin is only weakly inhibitory. Involved in the biosynthesis of fluorometabolites. Catalyzes the formation of a C-F bond by combining S-adenosyl-L-methionine (SAM) and fluoride to generate 5'-fluoro-5'-deoxyadenosine (5'-FDA) and L-methionine. It can also use 2'-deoxyadenosine in place of adenosine as substrate. The protein is Fluorinase of Streptantibioticus cattleyicolor (Streptomyces cattleya).